The primary structure comprises 254 residues: Germin-like protein 4-1 (254 aa).

A signal peptide spans 1-27; the sequence is MASRAFAAVFAAVALVVCSSVLPRALA. Cysteines 37 and 52 form a disulfide. Positions 67–220 constitute a Cupin type-1 domain; sequence KALGVPGNTV…AFMIDKDQVD (154 aa). The Mn(2+) site is built by histidine 115, histidine 117, glutamate 122, and histidine 166.

This sequence belongs to the germin family. In terms of assembly, oligomer (believed to be a pentamer but probably hexamer).

The protein localises to the secreted. Its subcellular location is the extracellular space. It localises to the apoplast. Functionally, may play a role in plant defense. Probably has no oxalate oxidase activity even if the active site is conserved. The protein is Germin-like protein 4-1 of Oryza sativa subsp. japonica (Rice).